A 325-amino-acid polypeptide reads, in one-letter code: DDB1- and CUL4-associated factor 7 homolog (325 aa).

WD repeat units follow at residues 62 to 104 (EHPY…RSIK), 115 to 155 (EFCA…AKTQ), 158 to 197 (AHDK…HSTI), and 247 to 287 (FHKS…KPIE).

Belongs to the WD repeat DCAF7 family.

The protein is DDB1- and CUL4-associated factor 7 homolog (wdr68) of Dictyostelium discoideum (Social amoeba).